Reading from the N-terminus, the 258-residue chain is Granzyme A (258 aa).

The first 26 residues, 1–26 (MNIPFPFSFPPAICLLLIPGVFPVSC), serve as a signal peptide directing secretion. Positions 27–28 (EG) are cleaved as a propeptide — activation peptide. Positions 29–255 (IIGGNEVAPH…HLNWIKKTIA (227 aa)) constitute a Peptidase S1 domain. The cysteines at positions 52 and 68 are disulfide-linked. Residues H67 and D112 each act as charge relay system in the active site. 3 disulfide bridges follow: C146–C217, C178–C196, and C207–C230. N169 is a glycosylation site (N-linked (GlcNAc...) asparagine). Residue S211 is the Charge relay system of the active site.

This sequence belongs to the peptidase S1 family. Granzyme subfamily. In terms of assembly, homodimer; disulfide-linked. Interacts with APEX1.

Its subcellular location is the secreted. It is found in the cytoplasmic granule. The enzyme catalyses Hydrolysis of proteins, including fibronectin, type IV collagen and nucleolin. Preferential cleavage: -Arg-|-Xaa-, -Lys-|-Xaa- &gt;&gt; -Phe-|-Xaa- in small molecule substrates.. In terms of biological role, abundant protease in the cytosolic granules of cytotoxic T-cells and NK-cells which activates caspase-independent pyroptosis when delivered into the target cell through the immunological synapse. It cleaves after Lys or Arg. Cleaves APEX1 after 'Lys-31' and destroys its oxidative repair activity. Cleaves the nucleosome assembly protein SET after 'Lys-189', which disrupts its nucleosome assembly activity and allows the SET complex to translocate into the nucleus to nick and degrade the DNA. In Bos taurus (Bovine), this protein is Granzyme A (GZMA).